Consider the following 383-residue polypeptide: Putative glutamate--cysteine ligase 2 (383 aa).

Belongs to the glutamate--cysteine ligase type 2 family. YbdK subfamily.

It carries out the reaction L-cysteine + L-glutamate + ATP = gamma-L-glutamyl-L-cysteine + ADP + phosphate + H(+). Functionally, ATP-dependent carboxylate-amine ligase which exhibits weak glutamate--cysteine ligase activity. The chain is Putative glutamate--cysteine ligase 2 from Clavibacter sepedonicus (Clavibacter michiganensis subsp. sepedonicus).